We begin with the raw amino-acid sequence, 161 residues long: MHELSLADVPSRIGQELGKSEWITVDQTTIDLFADATHDHQFIHVHPERAAVESPFGGTIAHGFLTLSLLSAMNFSGMPKIREQTMGLNYGLDRVRFMSPVKTGSRVRGRFVLSECQFRGASMLVTTYEVTVEIENENRPALTANWITIIQFDPNDRPKGI.

One can recognise a MaoC-like domain in the interval 9-133 (VPSRIGQELG…LVTTYEVTVE (125 aa)).

The protein to the R.meliloti counterpart.

In terms of biological role, involved in the production of the root hair deformation (HAD) factor specifically on medicago. In Rhizobium leguminosarum bv. viciae, this protein is Nodulation protein N (nodN).